The chain runs to 244 residues: Haloacid dehalogenase-like hydrolase domain-containing protein Sgpp (244 aa).

Residue Asp-28 is the Nucleophile of the active site. Mg(2+) contacts are provided by Asp-28, Asp-30, and Asp-189. The active-site Proton donor is Asp-30.

This sequence belongs to the HAD-like hydrolase superfamily. DOG/GPP family. The cofactor is Mg(2+). Ubiquitous with highest expression in flowers.

Acts as a phosphosugar phosphatase on a broad range of sugar phosphate substrates with preferential activity on D-ribose-5-phosphate, 2-deoxy-D-ribose-5-phosphate, 2-deoxy-D-glucose-6-phosphate, and D-mannose-6-phosphate and with a lower activity on D-fructose-1-phosphate, D-glucose-6-phosphate, DL-glycerol-3-phosphate, and D-fructose-6-phosphate. The chain is Haloacid dehalogenase-like hydrolase domain-containing protein Sgpp (SGPP) from Arabidopsis thaliana (Mouse-ear cress).